Consider the following 208-residue polypeptide: Somatotropin-B (208 aa).

An N-terminal signal peptide occupies residues 1–25; sequence MVPGSCSSFGLLVILSFQNVPDVGG. H44 contributes to the Zn(2+) binding site. A disulfide bridge connects residues C77 and C181. E190 serves as a coordination point for Zn(2+). An intrachain disulfide couples C198 to C206.

The protein belongs to the somatotropin/prolactin family.

The protein localises to the secreted. Its function is as follows. Growth hormone plays an important role in growth control. The protein is Somatotropin-B (gh-b) of Xenopus laevis (African clawed frog).